Here is a 472-residue protein sequence, read N- to C-terminus: Hepatocyte nuclear factor 3-alpha (472 aa).

Positions 169-260 form a DNA-binding region, fork-head; it reads AKPPYSYISL…GNMFENGCYL (92 aa). The tract at residues 269-392 is disordered; it reads EKQPGAGGGG…ESQLHLKGDP (124 aa). The segment covering 273-289 has biased composition (gly residues); that stretch reads GAGGGGGSGSGGSGAKG. Phosphoserine occurs at positions 307 and 331. Composition is skewed to low complexity over residues 322 to 332 and 351 to 366; these read GAPAPGPAASP and TPASSTAPPISSGPGA.

In terms of assembly, binds DNA as a monomer. Interacts with FOXA2. Interacts with NKX2-1. Interacts with HDAC7. Interacts with the histone H3-H4 heterodimer. Associates with nucleosomes containing histone H2A. Interacts with AR. Interacts with NR0B2. In terms of tissue distribution, highly expressed in prostate and ESR1-positive breast tumors. Overexpressed in esophageal and lung adenocarcinomas.

It localises to the nucleus. Its function is as follows. Transcription factor that is involved in embryonic development, establishment of tissue-specific gene expression and regulation of gene expression in differentiated tissues. Is thought to act as a 'pioneer' factor opening the compacted chromatin for other proteins through interactions with nucleosomal core histones and thereby replacing linker histones at target enhancer and/or promoter sites. Binds DNA with the consensus sequence 5'-[AC]A[AT]T[AG]TT[GT][AG][CT]T[CT]-3'. Proposed to play a role in translating the epigenetic signatures into cell type-specific enhancer-driven transcriptional programs. Its differential recruitment to chromatin is dependent on distribution of histone H3 methylated at 'Lys-5' (H3K4me2) in estrogen-regulated genes. Involved in the development of multiple endoderm-derived organ systems such as liver, pancreas, lung and prostate; FOXA1 and FOXA2 seem to have at least in part redundant roles. Modulates the transcriptional activity of nuclear hormone receptors. Is involved in ESR1-mediated transcription; required for ESR1 binding to the NKX2-1 promoter in breast cancer cells; binds to the RPRM promoter and is required for the estrogen-induced repression of RPRM. Involved in regulation of apoptosis by inhibiting the expression of BCL2. Involved in cell cycle regulation by activating expression of CDKN1B, alone or in conjunction with BRCA1. Originally described as a transcription activator for a number of liver genes such as AFP, albumin, tyrosine aminotransferase, PEPCK, etc. Interacts with the cis-acting regulatory regions of these genes. Involved in glucose homeostasis. The polypeptide is Hepatocyte nuclear factor 3-alpha (FOXA1) (Homo sapiens (Human)).